The primary structure comprises 177 residues: NAD(P)H-quinone oxidoreductase subunit 6, chloroplastic (177 aa).

Helical transmembrane passes span 10–30, 32–52, 61–81, 92–112, and 152–172; these read ILLV…VLLT, PIYS…FYIP, AQLL…VMFM, FWTV…FSLI, and FYLP…GAIA.

It belongs to the complex I subunit 6 family. As to quaternary structure, NDH is composed of at least 16 different subunits, 5 of which are encoded in the nucleus.

The protein resides in the plastid. It is found in the chloroplast thylakoid membrane. It carries out the reaction a plastoquinone + NADH + (n+1) H(+)(in) = a plastoquinol + NAD(+) + n H(+)(out). It catalyses the reaction a plastoquinone + NADPH + (n+1) H(+)(in) = a plastoquinol + NADP(+) + n H(+)(out). NDH shuttles electrons from NAD(P)H:plastoquinone, via FMN and iron-sulfur (Fe-S) centers, to quinones in the photosynthetic chain and possibly in a chloroplast respiratory chain. The immediate electron acceptor for the enzyme in this species is believed to be plastoquinone. Couples the redox reaction to proton translocation, and thus conserves the redox energy in a proton gradient. The polypeptide is NAD(P)H-quinone oxidoreductase subunit 6, chloroplastic (ndhG) (Nymphaea alba (White water-lily)).